A 91-amino-acid chain; its full sequence is Sec-independent protein translocase protein TatA (91 aa).

Residues 1–21 (MGIFDWKHWIVILIVVVLVFG) form a helical membrane-spanning segment. Positions 41 to 91 (KAMNDDDKPAEQPAPQPQQAQPAPQGSPLNQPHTIDAQAHKVDEPIRKDQV) are disordered. Residues 51 to 64 (EQPAPQPQQAQPAP) show a composition bias toward low complexity. The segment covering 78–91 (QAHKVDEPIRKDQV) has biased composition (basic and acidic residues).

This sequence belongs to the TatA/E family. In terms of assembly, the Tat system comprises two distinct complexes: a TatABC complex, containing multiple copies of TatA, TatB and TatC subunits, and a separate TatA complex, containing only TatA subunits. Substrates initially bind to the TatABC complex, which probably triggers association of the separate TatA complex to form the active translocon.

Its subcellular location is the cell inner membrane. In terms of biological role, part of the twin-arginine translocation (Tat) system that transports large folded proteins containing a characteristic twin-arginine motif in their signal peptide across membranes. TatA could form the protein-conducting channel of the Tat system. The sequence is that of Sec-independent protein translocase protein TatA from Pseudomonas syringae pv. syringae (strain B728a).